The following is a 521-amino-acid chain: Medium/long-chain-fatty-acid--[acyl-carrier-protein] ligase MbtM (521 aa).

Positions 146-172 (RRCPEPPAPHANPAILQGTAGSTGTPK) are disordered.

It belongs to the ATP-dependent AMP-binding enzyme family.

It catalyses the reaction a long-chain fatty acid + holo-[ACP] + ATP = a long-chain fatty acyl-[ACP] + AMP + diphosphate. It carries out the reaction a medium-chain fatty acid + holo-[ACP] + ATP = a medium-chain fatty acyl-[ACP] + AMP + diphosphate. It functions in the pathway siderophore biosynthesis; mycobactin biosynthesis. Its function is as follows. Activates lipidic moieties required for mycobactin biosynthesis. Converts medium- to long-chain aliphatic fatty acids into acyl adenylate, which is further transferred on to the phosphopantetheine arm of the carrier protein MbtL. The protein is Medium/long-chain-fatty-acid--[acyl-carrier-protein] ligase MbtM (mbtM) of Mycolicibacterium paratuberculosis (strain ATCC BAA-968 / K-10) (Mycobacterium paratuberculosis).